Consider the following 99-residue polypeptide: CTP synthase (99 aa).

Positions 1–99 (TMVTKLEKDS…FIKAIIENNK (99 aa)) constitute a Glutamine amidotransferase type-1 domain. Residue Arg28 participates in L-glutamine binding. Catalysis depends on residues His73 and Glu75.

This sequence belongs to the CTP synthase family. Homotetramer.

It catalyses the reaction UTP + L-glutamine + ATP + H2O = CTP + L-glutamate + ADP + phosphate + 2 H(+). The catalysed reaction is L-glutamine + H2O = L-glutamate + NH4(+). It carries out the reaction UTP + NH4(+) + ATP = CTP + ADP + phosphate + 2 H(+). Its pathway is pyrimidine metabolism; CTP biosynthesis via de novo pathway; CTP from UDP: step 2/2. Its activity is regulated as follows. Allosterically activated by GTP, when glutamine is the substrate; GTP has no effect on the reaction when ammonia is the substrate. The allosteric effector GTP functions by stabilizing the protein conformation that binds the tetrahedral intermediate(s) formed during glutamine hydrolysis. Inhibited by the product CTP, via allosteric rather than competitive inhibition. Catalyzes the ATP-dependent amination of UTP to CTP with either L-glutamine or ammonia as the source of nitrogen. Regulates intracellular CTP levels through interactions with the four ribonucleotide triphosphates. The protein is CTP synthase of Mycoplasma capricolum subsp. capripneumoniae.